We begin with the raw amino-acid sequence, 223 residues long: 7-cyano-7-deazaguanine synthase (223 aa).

15 to 25 (FSGGQDSTTCL) is a binding site for ATP. Residues C191, C200, C203, and C206 each contribute to the Zn(2+) site.

The protein belongs to the QueC family. Homodimer. It depends on Zn(2+) as a cofactor.

The catalysed reaction is 7-carboxy-7-deazaguanine + NH4(+) + ATP = 7-cyano-7-deazaguanine + ADP + phosphate + H2O + H(+). It functions in the pathway purine metabolism; 7-cyano-7-deazaguanine biosynthesis. In terms of biological role, catalyzes the ATP-dependent conversion of 7-carboxy-7-deazaguanine (CDG) to 7-cyano-7-deazaguanine (preQ(0)). In Staphylococcus saprophyticus subsp. saprophyticus (strain ATCC 15305 / DSM 20229 / NCIMB 8711 / NCTC 7292 / S-41), this protein is 7-cyano-7-deazaguanine synthase.